The primary structure comprises 435 residues: Eukaryotic translation initiation factor 3 subunit E (435 aa).

In terms of domain architecture, PCI spans 219 to 392 (FFNHPKGRDL…GHVVMGTQPL (174 aa)).

This sequence belongs to the eIF-3 subunit E family. Component of the eukaryotic translation initiation factor 3 (eIF-3) complex. The eIF-3 complex interacts with pix. Interacts with mxt. As to expression, expression levels in females and males are relatively similar 10 days after oviposition, however by day 15 expression is higher in gravid females than in males (at protein level).

It localises to the cytoplasm. The protein resides in the microsome. The protein localises to the endoplasmic reticulum. Functionally, component of the eukaryotic translation initiation factor 3 (eIF-3) complex, which is involved in protein synthesis of a specialized repertoire of mRNAs and, together with other initiation factors, stimulates binding of mRNA and methionyl-tRNAi to the 40S ribosome. The eIF-3 complex specifically targets and initiates translation of a subset of mRNAs involved in cell proliferation. In addition to its role in the eIF-3 complex, also functions in protein ubiquitination and degradation. During mitosis required for regulating mitotic microtubule growth and kinetochore formation, and consequently is required for satisfying the spindle assembly checkpoint (SAC) during metaphase to prevent delays in mitotic progression. This is likely by promoting the ubiquitination and degradation of Klp67A, a kinesin-like protein that suppresses microtubule polymerization at plus ends. Acts in the COP9 signalosome (CSN) mediated regulation of cullin neddylation by promoting Cul1 and Cul3 neddylation and negatively regulating the CSN complex subunit CSN5. This chain is Eukaryotic translation initiation factor 3 subunit E, found in Drosophila melanogaster (Fruit fly).